The primary structure comprises 632 residues: Chaperone protein DnaK (632 aa).

Threonine 198 bears the Phosphothreonine; by autocatalysis mark.

Belongs to the heat shock protein 70 family.

Functionally, acts as a chaperone. This is Chaperone protein DnaK from Rhodopseudomonas palustris (strain BisB18).